The primary structure comprises 818 residues: MAAFSVNGQLIPTATSSTASTSLSSRRKFLSPSSSRLPRISTQSPRVPSIKCSKSLPNRDTETSSKDSLLKNLAKPLAVASVSSAASFFLFRISNLPSVLTGGGGGGDGNFGGFGGGGGGGDGNDGGFWGKLFSPSPAVADEEQSPDWDSHGLPANIVVQLNKLSGFKKYKVSDIMFFDRRRQTTIGTEDSFFEMVSIRPGGVYTKAQLQKELETLATCGMFEKVDLEGKTKPDGTLGVTISFAESTWQSADRFRCINVGLMVQSKPIEMDSDMTDKEKLEYYRSLEKDYKRRIDRARPCLLPAPVYGEVMQMLRDQGKVSARLLQRIRDRVQKWYHDEGYACAQVVNFGNLNTKEVVCEVVEGDITQLVIQFQDKLGNVVEGNTQVPVVRRELPKQLRQGYVFNIEAGKKALSNINSLGLFSNIEVNPRPDEKNEGGIIVEIKLKELEQKSAEVSTEWSIVPGRGGAPTLASFQPGGSVTFEHRNLQGLNRSLMGSVTTSNFLNPQDDLSFKLEYVHPYLDGVYNPRNRTFKTSCFNSRKLSPVFTGGPGVEEVPPIWVDRAGVKANITENFTRQSKFTYGLVMEEITTRDESSHIAANGQRLLPSGGISADGPPTTLSGTGVDRMAFLQANITRDNTKFVNGAVVGQRTVFQVDQGLGIGSKFPFFNRHQLTMTKFIQLREVEQGAGKSPPPVLVLHGHYGGCVGDLPSYDAFVLGGPYSVRGYNMGELGAARNIAEVGAEIRIPVKNTHVYAFVEHGNDLGSSKDVKGNPTAVYRRTGQGSSYGAGVKLGLVRAEYAVDHNNGTGALFFRFGERY.

The N-terminal 79 residues, 1 to 79 (MAAFSVNGQL…LKNLAKPLAV (79 aa)), are a transit peptide targeting the chloroplast. Low complexity predominate over residues 15-41 (TSSTASTSLSSRRKFLSPSSSRLPRIS). The interval 15–67 (TSSTASTSLSSRRKFLSPSSSRLPRISTQSPRVPSIKCSKSLPNRDTETSSKD) is disordered. The segment covering 57–67 (PNRDTETSSKD) has biased composition (basic and acidic residues). A chloroplast; outer membrane-targeting transit peptide spans 80–140 (ASVSSAASFF…KLFSPSPAVA (61 aa)). 3 consecutive POTRA domains span residues 141 to 246 (DEEQ…FAES), 247 to 364 (TWQS…VVEG), and 365 to 448 (DITQ…LKEL). Residues 141–473 (DEEQSPDWDS…GRGGAPTLAS (333 aa)) are Chloroplast intermembrane-facing. A beta stranded transmembrane segment spans residues 474-482 (FQPGGSVTF). Residues 483 to 509 (EHRNLQGLNRSLMGSVTTSNFLNPQDD) are Cytoplasmic-facing. Residues 510 to 518 (LSFKLEYVH) traverse the membrane as a beta stranded segment. The Chloroplast intermembrane segment spans residues 519-562 (PYLDGVYNPRNRTFKTSCFNSRKLSPVFTGGPGVEEVPPIWVDR). Residues 563 to 570 (AGVKANIT) traverse the membrane as a beta stranded segment. Topologically, residues 571 to 578 (ENFTRQSK) are cytoplasmic. The beta stranded transmembrane segment at 579–586 (FTYGLVME) threads the bilayer. Over 587–693 (EITTRDESSH…VEQGAGKSPP (107 aa)) the chain is Chloroplast intermembrane. The chain crosses the membrane as a beta stranded span at residues 694–702 (PVLVLHGHY). Residues 703–714 (GGCVGDLPSYDA) lie on the Cytoplasmic side of the membrane. A beta stranded membrane pass occupies residues 715 to 723 (FVLGGPYSV). Over 724–785 (RGYNMGELGA…VYRRTGQGSS (62 aa)) the chain is Chloroplast intermembrane. The beta stranded transmembrane segment at 786–792 (YGAGVKL) threads the bilayer. The Cytoplasmic portion of the chain corresponds to 793-806 (GLVRAEYAVDHNNG). The chain crosses the membrane as a beta stranded span at residues 807-814 (TGALFFRF). Over 815-818 (GERY) the chain is Chloroplast intermembrane.

It belongs to the TOC75 family. As to quaternary structure, part of the TOC core complex that includes a protein for the specific recognition of transit peptides surrounded by a ring composed of four proteins forming translocation channels, and four to five GTP-binding proteins providing energy. This core complex can interact with components of the TIC complex to form a larger import complex. Chloroplastic protein precursors such as prSS (precursor of the RuBisCO small subunit) also interact with these complexes. The TOC complex contains a specific subset of polar lipids such as digalactosyldiacylglyceride (DGDG), phosphatidylcholine (PC) and phosphatidylglycerol (PG). TOC75-3 interacts with TOC34/OEP34, TOC159/TOC86, TOC132 and TOC120. Interacts with SP1. Interacts with TIC236. In terms of tissue distribution, mostly expressed in young and actively dividing photosynthetic tissues and, to a lower extent, in old leaves and roots. Particularly low levels in leaves after etiolation.

The protein resides in the plastid. It is found in the chloroplast outer membrane. Functionally, essential protein. Mediates the insertion of proteins targeted to the outer membrane of chloroplasts. Required for the import of protein precursors into chloroplasts. Forms the voltage-dependent preprotein translocation channels (hydrophilic beta barrel) of the TOC complex in the chloroplastic outer membrane. The chain is Protein TOC75-3, chloroplastic from Arabidopsis thaliana (Mouse-ear cress).